The following is a 1073-amino-acid chain: Probable nuclear hormone receptor HR38 (1073 aa).

Disordered regions lie at residues 55–87 (NLNA…LPPP), 150–185 (TPAP…SNCD), 263–326 (TQTA…LVSP), 437–458 (ALHA…QQHQ), 492–514 (KYNS…APTP), 529–579 (PPLS…NSGG), and 618–640 (GQQQ…NGER). Low complexity-rich tracts occupy residues 59–82 (PTHQ…QQHP), 175–185 (DSNSDSNSNCD), and 263–277 (TQTA…ASAA). Residues 279 to 291 (HHQHHNHLLHQQH) are compositionally biased toward basic residues. 3 stretches are compositionally biased toward low complexity: residues 292 to 326 (HNQQ…LVSP), 441 to 458 (QQQQ…QQHQ), and 495 to 514 (SSSG…APTP). Low complexity predominate over residues 619-636 (QQQQQQQQSYQQHNYNSH). The nuclear receptor DNA-binding region spans 741-816 (SQLCAVCGDT…VGMVKEVVRT (76 aa)). 2 consecutive NR C4-type zinc fingers follow at residues 744–764 (CAVC…CEGC) and 780–804 (CLAD…FQKC). Positions 819–841 (LKGRRGRLPSKPKSPQESPPSPP) are disordered. One can recognise an NR LBD domain in the interval 840-1070 (PPISLITALV…ALIENMFVTT (231 aa)).

This sequence belongs to the nuclear hormone receptor family. NR4 subfamily. As to quaternary structure, forms a heterodimer with USP. As to expression, ubiquitously expressed in preblastoderm embryos, specifically in central nervous system and intestinal tract. Highly expressed in third instar larval imaginal disks and brain complexes, but not in ovaries.

Its subcellular location is the nucleus. Its function is as follows. Binds to NGFI-B response elements. Plays an important role in late stages of epidermal metamorphosis. The chain is Probable nuclear hormone receptor HR38 (Hr38) from Drosophila melanogaster (Fruit fly).